The sequence spans 450 residues: tRNA modification GTPase MnmE (450 aa).

(6S)-5-formyl-5,6,7,8-tetrahydrofolate-binding residues include Arg-23, Glu-79, and Lys-118. In terms of domain architecture, TrmE-type G spans 214–374 (GITLILVGKP…LKEHILNKVG (161 aa)). Asn-224 provides a ligand contact to K(+). Residues 224–229 (NAGKSS), 243–249 (TSIAGTT), and 268–271 (DTAG) each bind GTP. A Mg(2+)-binding site is contributed by Ser-228. Residues Thr-243, Ile-245, and Thr-248 each coordinate K(+). Thr-249 is a Mg(2+) binding site. Lys-450 serves as a coordination point for (6S)-5-formyl-5,6,7,8-tetrahydrofolate.

It belongs to the TRAFAC class TrmE-Era-EngA-EngB-Septin-like GTPase superfamily. TrmE GTPase family. Homodimer. Heterotetramer of two MnmE and two MnmG subunits. K(+) serves as cofactor.

The protein resides in the cytoplasm. In terms of biological role, exhibits a very high intrinsic GTPase hydrolysis rate. Involved in the addition of a carboxymethylaminomethyl (cmnm) group at the wobble position (U34) of certain tRNAs, forming tRNA-cmnm(5)s(2)U34. The polypeptide is tRNA modification GTPase MnmE (Francisella tularensis subsp. holarctica (strain OSU18)).